Consider the following 307-residue polypeptide: Chlorophyll a-b binding protein 1, chloroplastic (307 aa).

The transit peptide at 1 to 44 (MAPYSVVASVLAAAPPQQSGSVRQLPSTINRAITQRSQSRHVAS) directs the protein to the chloroplast. The tract at residues 34–54 (TQRSQSRHVASASSASSPTTM) is disordered. Positions 52, 63, 64, 65, 68, 81, 86, 89, 90, 91, and 92 each coordinate chlorophyll a. Leu-96 serves as a coordination point for loroxanthin. A helical transmembrane segment spans residues 111–143 (NYDESRLRWLLEGELYNGRLAMLAVVGVLTVEA). Leu-120, Glu-124, Asn-127, Met-132, and Lys-146 together coordinate chlorophyll a. Residue Trp-149 participates in loroxanthin binding. Chlorophyll a is bound by residues Glu-151, Tyr-163, His-171, Glu-178, Arg-181, Glu-190, Arg-198, and Asp-200. Residues 161-186 (TPYVVAVVGGHLAFALLEKKRLENFR) form a helical membrane-spanning segment. 2 residues coordinate all-trans-violaxanthin: Asp-200 and Leu-202. Leu-204, Asn-208, Tyr-214, Asn-215, Ala-218, Asn-222, and Arg-224 together coordinate chlorophyll a. The helical transmembrane segment at 213–238 (DYNRQAEVRNCRLAMLTFLGFSVQAW) threads the bilayer. Phe-230 contributes to the loroxanthin binding site. An all-trans-violaxanthin-binding site is contributed by Phe-233. Gln-236 serves as a coordination point for chlorophyll a. An all-trans-violaxanthin-binding site is contributed by Pro-244. Positions 247, 251, 255, 256, 258, 259, 260, and 274 each coordinate chlorophyll a. Residues 265-289 (DRGTNVVAIFSAFAAVMHIAELARE) traverse the membrane as a helical segment.

Belongs to the light-harvesting chlorophyll a/b-binding (LHC) protein family. Homooligomer. Component of a light-harvesting complex (LHC) consisting of 11 chlorophyll a-b binding proteins. Binds 11 chlorophylls (Chl-a and Chl-b) and the 2 carotenoids violaxanthin and loroxanthin. is required as a cofactor.

Its subcellular location is the plastid. The protein resides in the chloroplast thylakoid membrane. In terms of biological role, component of a light-harvesting complex (LHC). The LHC functions as a light receptor, it captures and delivers excitation energy to photosystems with which it is closely associated. Functions in a far-red LHC by absorbing far-red light and promoting photosystem II (PSII) excitation, likely with entropy-driven uphill excitation energy transfer. Exhibits a typical absorption band at 671 nm (Qy band), as well as a large far-red absorption band at 706.5 together with fluorescence emission at around 713 nm (F713). The protein is Chlorophyll a-b binding protein 1, chloroplastic of Prasiola crispa (Green alga).